Consider the following 264-residue polypeptide: Nuclear egress protein 1 (264 aa).

Basic residues predominate over residues M1 to R12. Residues M1–K22 form a disordered region. The CCCH-type zinc-finger motif lies at C83–H187.

It belongs to the herpesviridae NEC1 protein family. Forms a heterohexameric complex with NEC2. Interacts with capsid vertex specific component 2/CVC2; this interaction directs the capsid to the host inner nuclear membrane to initiate budding. Post-translationally, phosphorylated at serine residues in the N-terminus. This phosphorylation regulates the localization within the inner nuclear membrane.

It localises to the host nucleus inner membrane. In terms of biological role, plays an essential role in virion nuclear egress, the first step of virion release from infected cell. Within the host nucleus, NEC1 interacts with the newly formed capsid through the vertexes and directs it to the inner nuclear membrane by associating with NEC2. Induces the budding of the capsid at the inner nuclear membrane as well as its envelopment into the perinuclear space. There, the NEC1/NEC2 complex promotes the fusion of the enveloped capsid with the outer nuclear membrane and the subsequent release of the viral capsid into the cytoplasm where it will reach the secondary budding sites in the host Golgi or trans-Golgi network. The chain is Nuclear egress protein 1 from Human herpesvirus 6A (strain Uganda-1102) (HHV-6 variant A).